The primary structure comprises 38 residues: Anthranilate phosphoribosyltransferase (38 aa).

Belongs to the anthranilate phosphoribosyltransferase family. In terms of assembly, homodimer.

It catalyses the reaction N-(5-phospho-beta-D-ribosyl)anthranilate + diphosphate = 5-phospho-alpha-D-ribose 1-diphosphate + anthranilate. It participates in amino-acid biosynthesis; L-tryptophan biosynthesis; L-tryptophan from chorismate: step 2/5. Catalyzes the transfer of the phosphoribosyl group of 5-phosphorylribose-1-pyrophosphate (PRPP) to anthranilate to yield N-(5'-phosphoribosyl)-anthranilate (PRA). The chain is Anthranilate phosphoribosyltransferase (trpD) from Serratia marcescens.